We begin with the raw amino-acid sequence, 567 residues long: Dihydroxy-acid dehydratase 3 (567 aa).

Cysteine 57 is a [2Fe-2S] cluster binding site. Aspartate 89 serves as a coordination point for Mg(2+). Residue cysteine 130 coordinates [2Fe-2S] cluster. 2 residues coordinate Mg(2+): aspartate 131 and lysine 132. Lysine 132 is subject to N6-carboxylysine. Cysteine 202 is a [2Fe-2S] cluster binding site. Residue glutamate 454 coordinates Mg(2+). The Proton acceptor role is filled by serine 480.

The protein belongs to the IlvD/Edd family. Homodimer. Requires [2Fe-2S] cluster as cofactor. The cofactor is Mg(2+).

The catalysed reaction is (2R)-2,3-dihydroxy-3-methylbutanoate = 3-methyl-2-oxobutanoate + H2O. The enzyme catalyses (2R,3R)-2,3-dihydroxy-3-methylpentanoate = (S)-3-methyl-2-oxopentanoate + H2O. Its pathway is amino-acid biosynthesis; L-isoleucine biosynthesis; L-isoleucine from 2-oxobutanoate: step 3/4. It functions in the pathway amino-acid biosynthesis; L-valine biosynthesis; L-valine from pyruvate: step 3/4. In terms of biological role, functions in the biosynthesis of branched-chain amino acids. Catalyzes the dehydration of (2R,3R)-2,3-dihydroxy-3-methylpentanoate (2,3-dihydroxy-3-methylvalerate) into 2-oxo-3-methylpentanoate (2-oxo-3-methylvalerate) and of (2R)-2,3-dihydroxy-3-methylbutanoate (2,3-dihydroxyisovalerate) into 2-oxo-3-methylbutanoate (2-oxoisovalerate), the penultimate precursor to L-isoleucine and L-valine, respectively. The protein is Dihydroxy-acid dehydratase 3 of Aromatoleum aromaticum (strain DSM 19018 / LMG 30748 / EbN1) (Azoarcus sp. (strain EbN1)).